The following is a 258-amino-acid chain: C1q-related factor (258 aa).

The signal sequence occupies residues 1 to 16 (MLLVLVVLIPVLVSSG). Residues 39–117 (GPGAGARTDG…PGLPGAGGSG (79 aa)) are disordered. Residues 67–77 (GPQGKPGRTGK) show a composition bias toward low complexity. Positions 67 to 115 (GPQGKPGRTGKPGPPGPPGDPGPPGPVGPPGEKGEPGKPGPPGLPGAGG) constitute a Collagen-like domain. A compositionally biased stretch (pro residues) spans 78–95 (PGPPGPPGDPGPPGPVGP). Positions 125–258 (TTVPRVAFYA…TFSGFIIYSD (134 aa)) constitute a C1q domain.

Interacts with ADGRB3. Forms heterooligomers with C1QL4, when proteins are coexpressed; this interaction does not occur after secretion. Expressed in brainstem.

Its subcellular location is the secreted. May regulate the number of excitatory synapses that are formed on hippocampus neurons. Has no effect on inhibitory synapses. The protein is C1q-related factor (C1QL1) of Homo sapiens (Human).